The following is a 193-amino-acid chain: MNYEAIVIGVSAGGINAMKTILPTLPTQFGIPIVIVQHIGARSDGEWFRILEKLCNIKIKEAEEKEEIKSGMVYVAPPNYHLLIEKDKTFSFSIGERVNFSRPSIDVLFETASEVYEDKLIGVILTGANSDGAQGLKKIKENGGLAVVQDPLTAEIALMPRSAIEATSVDYVLSLEKIAELFIRLDQNNLEQR.

The 179-residue stretch at M1 to A179 folds into the CheB-type methylesterase domain. Catalysis depends on residues S11, H38, and D131.

It belongs to the CheB family.

Its subcellular location is the cytoplasm. It catalyses the reaction [protein]-L-glutamate 5-O-methyl ester + H2O = L-glutamyl-[protein] + methanol + H(+). The enzyme catalyses L-glutaminyl-[protein] + H2O = L-glutamyl-[protein] + NH4(+). Functionally, may be involved in chemotaxis. The protein is Putative protein-glutamate methylesterase/protein-glutamine glutaminase (cheB2) of Leptospira interrogans serogroup Icterohaemorrhagiae serovar copenhageni (strain Fiocruz L1-130).